A 585-amino-acid chain; its full sequence is Eukaryotic translation initiation factor 3 subunit D (585 aa).

A compositionally biased stretch (gly residues) spans G110 to A130. Residues G110–A152 are disordered. Residues S300–P314 form an RNA gate region. Residues V560 to E585 are disordered. Positions F565–E585 are enriched in acidic residues.

Belongs to the eIF-3 subunit D family. Component of the eukaryotic translation initiation factor 3 (eIF-3) complex.

It localises to the cytoplasm. Its function is as follows. mRNA cap-binding component of the eukaryotic translation initiation factor 3 (eIF-3) complex, which is involved in protein synthesis of a specialized repertoire of mRNAs and, together with other initiation factors, stimulates binding of mRNA and methionyl-tRNAi to the 40S ribosome. The eIF-3 complex specifically targets and initiates translation of a subset of mRNAs involved in cell proliferation. In the eIF-3 complex, eif3d specifically recognizes and binds the 7-methylguanosine cap of a subset of mRNAs. This chain is Eukaryotic translation initiation factor 3 subunit D, found in Aspergillus fumigatus (strain CBS 144.89 / FGSC A1163 / CEA10) (Neosartorya fumigata).